Here is a 565-residue protein sequence, read N- to C-terminus: uncharacterized protein (565 aa).

The next 5 membrane-spanning stretches (helical) occupy residues 14-34 (LAIFLTLFVGFWIGKIKIGKF), 36-56 (LGVVTSVLLVGVLVGQLDITV), 92-112 (MGFAAIMCVFCLIIPWILAKI), 117-137 (VGEAAGLLAGSQTISAVIGVA), and 157-177 (IIPVSYAVTYIFGTAGSAWVL). The RCK C-terminal domain occupies 296 to 381 (PEVLDPQLLD…VDAAAKQLGY (86 aa)). Transmembrane regions (helical) follow at residues 391 to 411 (MIFVGLGILIGGLIGALSIHM), 414 to 434 (VPISLSTSGGALIGGLFFGWL), 448 to 468 (ALWILDNVGLNMFIAVVGIAA), 481 to 501 (LSLFIVGALATSIPLIAGILM), 508 to 530 (FHPALVLGCTAGARTTTAALGAI), and 545 to 565 (VTYAVGNTLLIIWGVVIVLLM).

It belongs to the AAE transporter (TC 2.A.81) family.

It localises to the cell membrane. This is an uncharacterized protein from Bacteroides fragilis (strain YCH46).